A 299-amino-acid chain; its full sequence is Zinc finger protein 414 (299 aa).

Polar residues-rich tracts occupy residues 1–20 and 70–80; these read MEEL…SSSN and SCQTSSTTRGV. Residues 1 to 102 are disordered; that stretch reads MEELSGPSSD…PPPGKQIPCS (102 aa). C2H2-type zinc fingers lie at residues 99 to 123 and 135 to 159; these read IPCS…LRTH and FRCS…GKLH. The segment at 166–190 adopts a C2H2-type 3; degenerate zinc-finger fold; that stretch reads FKCENCLLRFRTHRSLFKHLHVCID. Disordered regions lie at residues 193-228 and 254-299; these read QNPA…PFPL and PRLR…GACR. Residues 203-215 show a composition bias toward basic and acidic residues; the sequence is LDKEPPVPERPPE. The segment covering 217–228 has biased composition (low complexity); the sequence is DPSSSLGLPFPL. Polar residues predominate over residues 268–285; it reads TSSTAIWKKSQGATSSPR.

It belongs to the krueppel C2H2-type zinc-finger protein family.

The protein localises to the nucleus. Functionally, may be involved in transcriptional regulation. The polypeptide is Zinc finger protein 414 (Znf414) (Rattus norvegicus (Rat)).